The primary structure comprises 91 residues: Bacterial microcompartment shell protein PduJ (91 aa).

The 85-residue stretch at 4–88 (ALGLVETKGL…PHSDVEAILP (85 aa)) folds into the BMC domain.

This sequence belongs to the bacterial microcompartments protein family. Homohexamer with a central pore. Interacts with PduP, which targets PduP to the BMC. Interacts with shell protein PduA.

The protein resides in the bacterial microcompartment. Its pathway is polyol metabolism; 1,2-propanediol degradation. One of the major shell proteins of the bacterial microcompartment (BMC) dedicated to 1,2-propanediol (1,2-PD) degradation. At least one of PduA or PduJ is required for BMC assembly; it must be encoded as the first gene in the pdu operon. Required for structural integrity of BMCs and to mitigate propionaldehyde toxicity, probably joins facets responsible for BMC closure. Probably the hub for binding multiple enzymes to the interior of the BMC. Functionally, expression of a cosmid containing the full 21-gene pdu operon in E.coli allows E.coli to grow on 1,2-PD with the appearance of BMCs in its cytoplasm. Overexpression of this protein leads to an internal structure with a whorled architecture. Its function is as follows. The 1,2-PD-specific bacterial microcompartment (BMC) concentrates low levels of 1,2-PD catabolic enzymes, concentrates volatile reaction intermediates thus enhancing pathway flux and keeps the level of toxic, mutagenic propionaldehyde low. The chain is Bacterial microcompartment shell protein PduJ from Citrobacter freundii.